Consider the following 450-residue polypeptide: Phosphoglucosamine mutase (450 aa).

The Phosphoserine intermediate role is filled by serine 97. The Mg(2+) site is built by serine 97, aspartate 236, aspartate 238, and aspartate 240. Serine 97 is subject to Phosphoserine.

Belongs to the phosphohexose mutase family. Requires Mg(2+) as cofactor. Activated by phosphorylation.

It carries out the reaction alpha-D-glucosamine 1-phosphate = D-glucosamine 6-phosphate. Catalyzes the conversion of glucosamine-6-phosphate to glucosamine-1-phosphate. This chain is Phosphoglucosamine mutase, found in Prochlorococcus marinus (strain MIT 9312).